Consider the following 46-residue polypeptide: Defensin-like protein AX1 (46 aa).

Cystine bridges form between Cys-3-Cys-46, Cys-14-Cys-34, Cys-20-Cys-40, and Cys-24-Cys-42.

As to expression, leaves and flowers.

Strong inhibiting activity against C.beticola and other filamentous fungi. Little or no effect against bacteria. The protein is Defensin-like protein AX1 of Beta vulgaris (Sugar beet).